A 500-amino-acid polypeptide reads, in one-letter code: NADH-quinone oxidoreductase subunit N (500 aa).

14 helical membrane passes run 6-26 (SWIA…IALV), 40-60 (ALTL…ALGG), 69-89 (MVVV…ALMI), 106-125 (GGEF…VMIS), 129-151 (FLVL…ALRR), 164-184 (FVLG…LYGA), 207-227 (LVFG…AVPF), 239-259 (PTAV…AMTI), 276-296 (MLAL…VAQT), 302-322 (LAFS…AGVV), 337-357 (MFYA…ILLL), 380-400 (YAGV…LVGF), 417-437 (SYLV…FYYL), and 464-484 (IVLA…SSLM).

The protein belongs to the complex I subunit 2 family. NDH-1 is composed of 14 different subunits. Subunits NuoA, H, J, K, L, M, N constitute the membrane sector of the complex.

It localises to the cell inner membrane. It catalyses the reaction a quinone + NADH + 5 H(+)(in) = a quinol + NAD(+) + 4 H(+)(out). Functionally, NDH-1 shuttles electrons from NADH, via FMN and iron-sulfur (Fe-S) centers, to quinones in the respiratory chain. The immediate electron acceptor for the enzyme in this species is believed to be ubiquinone. Couples the redox reaction to proton translocation (for every two electrons transferred, four hydrogen ions are translocated across the cytoplasmic membrane), and thus conserves the redox energy in a proton gradient. This Polaromonas naphthalenivorans (strain CJ2) protein is NADH-quinone oxidoreductase subunit N.